The primary structure comprises 355 residues: Uroporphyrinogen decarboxylase (355 aa).

Substrate contacts are provided by residues 27 to 31, Phe-46, Asp-77, Tyr-154, Ser-209, and His-327; that span reads RQAGR.

Belongs to the uroporphyrinogen decarboxylase family. As to quaternary structure, homodimer.

Its subcellular location is the cytoplasm. The enzyme catalyses uroporphyrinogen III + 4 H(+) = coproporphyrinogen III + 4 CO2. It participates in porphyrin-containing compound metabolism; protoporphyrin-IX biosynthesis; coproporphyrinogen-III from 5-aminolevulinate: step 4/4. Its function is as follows. Catalyzes the decarboxylation of four acetate groups of uroporphyrinogen-III to yield coproporphyrinogen-III. The polypeptide is Uroporphyrinogen decarboxylase (Nitrosomonas europaea (strain ATCC 19718 / CIP 103999 / KCTC 2705 / NBRC 14298)).